The chain runs to 120 residues: MSKIVKFLKELATPSHSMEFFHKPASNSLLDASELNFVRRNIKREDFGHEVLTGAFGTLKSPVIVESIFHSRIVACEGGDGEEHDILFHTVAEKKPTICLDCGQVFKLKHISSEGEVMYY.

Residue S2 is modified to Blocked amino end (Ser). The Zn(2+) site is built by C76, H84, C99, and C102.

This sequence belongs to the cytochrome c oxidase subunit 5B family. As to quaternary structure, component of the cytochrome c oxidase (complex IV, CIV), a multisubunit enzyme composed of a catalytic core of 3 subunits and several supernumerary subunits. The complex exists as a monomer or a dimer and forms supercomplexes (SCs) in the inner mitochondrial membrane with ubiquinol-cytochrome c oxidoreductase (cytochrome b-c1 complex, complex III, CIII). Slime mold cytochrome c oxidase consists of at least seven different polypeptides species, subunits I, II, III, IV, V, VI, and VIIe/s in order of MW.

It is found in the mitochondrion inner membrane. Its pathway is energy metabolism; oxidative phosphorylation. Functionally, component of the cytochrome c oxidase, the last enzyme in the mitochondrial electron transport chain which drives oxidative phosphorylation. The respiratory chain contains 3 multisubunit complexes succinate dehydrogenase (complex II, CII), ubiquinol-cytochrome c oxidoreductase (cytochrome b-c1 complex, complex III, CIII) and cytochrome c oxidase (complex IV, CIV), that cooperate to transfer electrons derived from NADH and succinate to molecular oxygen, creating an electrochemical gradient over the inner membrane that drives transmembrane transport and the ATP synthase. Cytochrome c oxidase is the component of the respiratory chain that catalyzes the reduction of oxygen to water. Electrons originating from reduced cytochrome c in the intermembrane space (IMS) are transferred via the dinuclear copper A center (CU(A)) of subunit 2 and heme A of subunit 1 to the active site in subunit 1, a binuclear center (BNC) formed by heme A3 and copper B (CU(B)). The BNC reduces molecular oxygen to 2 water molecules using 4 electrons from cytochrome c in the IMS and 4 protons from the mitochondrial matrix. The protein is Cytochrome c oxidase subunit 5 (cxeA) of Dictyostelium discoideum (Social amoeba).